The sequence spans 548 residues: Thermosome subunit beta (548 aa).

This sequence belongs to the TCP-1 chaperonin family. In terms of assembly, forms a Heterooligomeric complex of two stacked eight-membered rings.

Molecular chaperone; binds unfolded polypeptides in vitro, and has a weak ATPase activity. The polypeptide is Thermosome subunit beta (thsB) (Aeropyrum pernix (strain ATCC 700893 / DSM 11879 / JCM 9820 / NBRC 100138 / K1)).